We begin with the raw amino-acid sequence, 839 residues long: Oligopeptide transporter phomP2 (839 aa).

Positions 1 to 58 (MEADPKVPFTDEMNIQDEHNWESGSWSSSRRSNDSNVTLLSRRSSVEQHEDERQKDSD) are disordered. Positions 23–36 (SGSWSSSRRSNDSN) are enriched in low complexity. 2 N-linked (GlcNAc...) asparagine glycosylation sites follow: Asn33 and Asn36. The span at 44–58 (SSVEQHEDERQKDSD) shows a compositional bias: basic and acidic residues. 6 helical membrane-spanning segments follow: residues 105–125 (VWLL…VYYF), 177–197 (ALVV…GPLS), 210–230 (PWAI…VGLY), 268–288 (VFMA…FVFP), 315–335 (GFGL…SPLF), and 345–365 (FVGA…SDAL). Residues Asn386 and Asn398 are each glycosylated (N-linked (GlcNAc...) asparagine). The next 4 membrane-spanning stretches (helical) occupy residues 415–435 (AMHF…AVLF), 478–498 (AWYA…LYAG), 505–525 (WGLQ…GMLF), and 585–605 (WELL…NWAV). A compositionally biased stretch (gly residues) spans 629 to 646 (QGLGLGQGGGGGGGGGGQ). Positions 629–654 (QGLGLGQGGGGGGGGGGQQQRAAGAH) are disordered. The next 3 helical transmembrane spans lie at 665–685 (NFFS…FGGG), 697–717 (WLLP…WLIH), and 728–748 (WPLH…FPTT). An N-linked (GlcNAc...) asparagine glycan is attached at Asn749. The chain crosses the membrane as a helical span at residues 781 to 801 (AGLDCGAQLVQMVLGVAFLVF).

The protein belongs to the oligopeptide OPT transporter family.

It is found in the membrane. Its function is as follows. Oligopeptide transporter; part of the gene cluster that mediates the biosynthesis of the phomopsins, a group of hexapeptide mycotoxins which infects lupins and causes lupinosis disease in livestock. This is Oligopeptide transporter phomP2 from Diaporthe leptostromiformis (Lupinosis disease fungus).